The primary structure comprises 296 residues: tRNA pseudouridine synthase B (296 aa).

The active-site Nucleophile is aspartate 38.

It belongs to the pseudouridine synthase TruB family. Type 1 subfamily.

The enzyme catalyses uridine(55) in tRNA = pseudouridine(55) in tRNA. Its function is as follows. Responsible for synthesis of pseudouridine from uracil-55 in the psi GC loop of transfer RNAs. This chain is tRNA pseudouridine synthase B, found in Synechocystis sp. (strain ATCC 27184 / PCC 6803 / Kazusa).